The chain runs to 326 residues: Microtubule-associated protein RP/EB family member 2 (326 aa).

Position 9 is a phosphoserine (Ser9). The Calponin-homology (CH) domain occupies 56–158 (TMSRHDIIAW…FIQWFKKFYD (103 aa)). Tyr166 carries the post-translational modification Phosphotyrosine. Disordered regions lie at residues 170–239 (EARQ…DKDL) and 297–326 (YASD…QEEY). Residues 186-326 (QIFNLPKKSH…DQQPQQQEEY (141 aa)) are DCTN1-binding. The span at 199–233 (SPTAGAAKSSPAAKPGSTPSRPSSAKRASSSGSAS) shows a compositional bias: low complexity. Residues Ser218 and Ser235 each carry the phosphoserine modification. An EB1 C-terminal domain is found at 235 to 305 (SDKDLETQVI…LYASDEQEGQ (71 aa)). Positions 258 to 301 (EGVEKERDFYFGKLREIELLCQEHGQENDDLVQRLMEVLYASDE) are APC-binding. Positions 300-312 (DEQEGQTEEPEVE) are enriched in acidic residues. The segment covering 317–326 (DQQPQQQEEY) has biased composition (low complexity).

This sequence belongs to the MAPRE family. Interacts with DCTN1. Interacts with APC (via C-terminal). Interacts with monomeric and polymerized tubulin. Interacts with SLAIN1. Interacts (via the N-terminal region) with BAG1. Interacts with ASB14. Interacts with HAX1; this interaction is essential for epidermal cell migration. Phosphorylated at Ser-235 by CK2 leading to enhanced cell adhesion. Phosphorylated by CDK1 and AURKB during mitosis reduces the binding affinity of MAPRE2 for microtubules. In terms of processing, ubiquitinated in an ASB14-dependent manner; leading to proteasomal degradation.

Its subcellular location is the cytoplasm. It localises to the cytoskeleton. Adapter protein that is involved in microtubule polymerization, and spindle function by stabilizing microtubules and anchoring them at centrosomes. Therefore, ensures mitotic progression and genome stability. Acts as a central regulator of microtubule reorganization in apico-basal epithelial differentiation. Plays a role during oocyte meiosis by regulating microtubule dynamics. Participates in neurite growth by interacting with plexin B3/PLXNB3 and microtubule reorganization during apico-basal epithelial differentiation. Also plays an essential role for cell migration and focal adhesion dynamics. Mechanistically, recruits HAX1 to microtubules in order to regulate focal adhesion dynamics. The sequence is that of Microtubule-associated protein RP/EB family member 2 (Mapre2) from Rattus norvegicus (Rat).